A 705-amino-acid chain; its full sequence is uncharacterized protein (705 aa).

Residues Cys-24–Cys-52 constitute a DNA-binding region (zn(2)-C6 fungal-type).

It is found in the nucleus. This is an uncharacterized protein from Saccharomyces cerevisiae (strain ATCC 204508 / S288c) (Baker's yeast).